A 261-amino-acid polypeptide reads, in one-letter code: Acyl-[acyl-carrier-protein]--UDP-N-acetylglucosamine O-acyltransferase (261 aa).

The protein belongs to the transferase hexapeptide repeat family. LpxA subfamily. In terms of assembly, homotrimer.

The protein resides in the cytoplasm. It catalyses the reaction a (3R)-hydroxyacyl-[ACP] + UDP-N-acetyl-alpha-D-glucosamine = a UDP-3-O-[(3R)-3-hydroxyacyl]-N-acetyl-alpha-D-glucosamine + holo-[ACP]. The protein operates within glycolipid biosynthesis; lipid IV(A) biosynthesis; lipid IV(A) from (3R)-3-hydroxytetradecanoyl-[acyl-carrier-protein] and UDP-N-acetyl-alpha-D-glucosamine: step 1/6. Involved in the biosynthesis of lipid A, a phosphorylated glycolipid that anchors the lipopolysaccharide to the outer membrane of the cell. In Paracoccus denitrificans (strain Pd 1222), this protein is Acyl-[acyl-carrier-protein]--UDP-N-acetylglucosamine O-acyltransferase.